The following is a 545-amino-acid chain: Monocarboxylate transporter 8 (545 aa).

The tract at residues 1–98 is disordered; sequence MALPSPASEE…VETRGTARGF (98 aa). Ala-2 carries the N-acetylalanine modification. Topologically, residues 2–102 are cytoplasmic; sequence ALPSPASEEA…GTARGFQPPE (101 aa). A run of 2 repeats spans residues 29-50 and 51-72. A 2 X 22 AA approximate tandem repeats region spans residues 29 to 72; sequence PVPEPEPEPEPEPEPDPEPVPVPPPEPQPEPEPQPLPDPAPLPE. Acidic residues predominate over residues 33-45; the sequence is PEPEPEPEPEPDP. The segment covering 46-70 has biased composition (pro residues); it reads EPVPVPPPEPQPEPEPQPLPDPAPL. Residues 103 to 123 traverse the membrane as a helical segment; sequence GGFGWIVVFAATWCNGSIFGI. At 124–149 the chain is on the extracellular side; it reads HNSVGILYSMLLEEEKEKNRQVEFQA. Residues 150–170 form a helical membrane-spanning segment; it reads AWVGALAMGMIFFCSPIVSIF. The Cytoplasmic segment spans residues 171 to 177; it reads TDRLGCR. The helical transmembrane segment at 178 to 198 threads the bilayer; that stretch reads ITATTGAAVAFIGLHTSSFTS. Over 199–206 the chain is Extracellular; sequence SLSLRYFT. The helical transmembrane segment at 207 to 227 threads the bilayer; it reads YGILFGCGCSFAFQPSLVILG. The Cytoplasmic segment spans residues 228 to 235; the sequence is HYFQRRLG. Residues 236–256 form a helical membrane-spanning segment; the sequence is LANGVVSAGSSIFSMSFPFLI. At 257 to 264 the chain is on the extracellular side; that stretch reads KMLGDKIK. The helical transmembrane segment at 265–285 threads the bilayer; that stretch reads LAQTFQVLSTFMFVLTLLSLT. The Cytoplasmic segment spans residues 286–328; it reads YRPLLPSSQDTPSKRGAHTLRQRFLVQFRKYFNMRVFRQRTYR. A helical transmembrane segment spans residues 329-349; sequence IWAFGIAAAALGYFVPYVHLM. Residues 350–362 are Extracellular-facing; the sequence is KYVEDKFKEIKET. Residues 363–383 form a helical membrane-spanning segment; the sequence is WVLLVCIGATSGLGRLVSGHI. Over 384–392 the chain is Cytoplasmic; that stretch reads SDSIPGLKK. The helical transmembrane segment at 393 to 413 threads the bilayer; it reads IYLQVLSFLLLGLMSMMIPLC. Residues 414–415 lie on the Extracellular side of the membrane; that stretch reads RD. The chain crosses the membrane as a helical span at residues 416 to 436; it reads FGGLIVVCLFLGLCDGFFITI. Topologically, residues 437-453 are cytoplasmic; that stretch reads MAPIAFELVGPMQASQA. Residues 454-474 form a helical membrane-spanning segment; the sequence is IGYLLGMMALPMIAGPPIAGL. Topologically, residues 475–483 are extracellular; it reads LRNCFGDYH. A helical membrane pass occupies residues 484-504; that stretch reads VAFYFAGVPPIIGAVILFFVP. Residues 505–545 lie on the Cytoplasmic side of the membrane; sequence LMHQRMFKKEQRDSSKDKMLSHDPDPNGELLPGSPTPEEPI. The span at 514 to 529 shows a compositional bias: basic and acidic residues; it reads EQRDSSKDKMLSHDPD. Positions 514–545 are disordered; it reads EQRDSSKDKMLSHDPDPNGELLPGSPTPEEPI. At Thr-540 the chain carries Phosphothreonine.

The protein belongs to the major facilitator superfamily. Monocarboxylate porter (TC 2.A.1.13) family. Monomer. Homodimer. Homooligomer. In terms of tissue distribution, expressed in cerebral microvessels.

It localises to the cell membrane. The protein resides in the apical cell membrane. The catalysed reaction is 3,3',5-triiodo-L-thyronine(out) = 3,3',5-triiodo-L-thyronine(in). It carries out the reaction 3,3',5'-triiodo-L-thyronine(out) = 3,3',5'-triiodo-L-thyronine(in). The enzyme catalyses L-thyroxine(out) = L-thyroxine(in). It catalyses the reaction 3,3'-diiodo-L-thyronine(out) = 3,3'-diiodo-L-thyronine(in). In terms of biological role, specific thyroid hormone transmembrane transporter, that mediates both uptake and efflux of thyroid hormones across the cell membrane independently of pH or a Na(+) gradient. Major substrates are the iodothyronines T3 and T4 and to a lesser extent rT3 and 3,3-diiodothyronine (3,3'-T2). Acts as an important mediator of thyroid hormone transport, especially T3, through the blood-brain barrier. This is Monocarboxylate transporter 8 (Slc16a2) from Mus musculus (Mouse).